The following is a 293-amino-acid chain: Biphenyl-2,3-diol 1,2-dioxygenase (293 aa).

VOC domains follow at residues 5–119 (RLGY…IYYG) and 143–265 (GIGH…FGWG). Fe cation contacts are provided by histidine 146, histidine 210, and glutamate 261.

This sequence belongs to the extradiol ring-cleavage dioxygenase family. Homooctamer. It depends on Fe(2+) as a cofactor.

It carries out the reaction biphenyl-2,3-diol + O2 = 2-hydroxy-6-oxo-6-phenylhexa-2,4-dienoate + H(+). It participates in xenobiotic degradation; biphenyl degradation; 2-hydroxy-2,4-pentadienoate and benzoate from biphenyl: step 3/4. The sequence is that of Biphenyl-2,3-diol 1,2-dioxygenase (bphC) from Pseudomonas sp. (strain KKS102).